The primary structure comprises 711 residues: Far upstream element-binding protein 2 (711 aa).

The segment at 1–147 (MSDYSTGGPP…HPPPRTSMTE (147 aa)) is disordered. S2 carries the post-translational modification N-acetylserine. A compositionally biased stretch (pro residues) spans 8 to 17 (GPPPGPPPPA). Gly residues-rich tracts occupy residues 18 to 28 (GGGGGAGGAGG) and 36 to 68 (GAGD…GGPG). R40 bears the Omega-N-methylarginine mark. An N6-acetyllysine modification is found at K87. S99 is modified (phosphoserine). T100 is modified (phosphothreonine). A compositionally biased stretch (basic and acidic residues) spans 110–122 (RQLEDGDQPESKK). K121 participates in a covalent cross-link: Glycyl lysine isopeptide (Lys-Gly) (interchain with G-Cter in SUMO1); alternate. K121 participates in a covalent cross-link: Glycyl lysine isopeptide (Lys-Gly) (interchain with G-Cter in SUMO2); alternate. A phosphoserine mark is found at S125, S129, S131, S181, S184, S193, and S274. 3 KH domains span residues 144–208 (SMTE…KMML), 233–299 (GTVQ…CEMV), and 322–386 (GGGI…ARII). The tract at residues 392–429 (SLRSGPPGPPGGPGMPPGGRGRGRGQGNWGPPGGEMTF) is disordered. The span at 397–407 (PPGPPGGPGMP) shows a compositional bias: pro residues. Over residues 408–424 (PGGRGRGRGQGNWGPPG) the composition is skewed to gly residues. 4 positions are modified to omega-N-methylarginine: R411, R413, R415, and R442. The 68-residue stretch at 424 to 491 (GGEMTFSIPT…QQIDHAKQLI (68 aa)) folds into the KH 4 domain. S480 carries the post-translational modification Phosphoserine. Residues 497–569 (GPLCPVGPGP…HDPSKAAAAA (73 aa)) are disordered. 2 stretches are compositionally biased toward pro residues: residues 501–520 (PVGP…PFNP) and 528–542 (PGAP…PHQY). Repeat unit 1 spans residues 571–582 (DPNAAWAAYYSH). Positions 571-684 (DPNAAWAAYY…SAAWAEYYRQ (114 aa)) are 4 X 12 AA imperfect repeats. Positions 583-711 (YYQQPPGPVP…PTQQGQQQAQ (129 aa)) are disordered. The span at 587 to 613 (PPGPVPGPAPAPAAPPAQGEPPQPPPT) shows a compositional bias: pro residues. 3 consecutive repeat copies span residues 617 to 628 (DYTKAWEEYYKK), 643 to 654 (DYTKAWEEYYKK), and 673 to 684 (DYSAAWAEYYRQ).

This sequence belongs to the KHSRP family. Part of a ternary complex containing FUBP2, PTBP1, PTBP2 and HNRPH1. Interacts with PARN. Interacts with PQBP1. In terms of processing, phosphorylation at Ser-193 leads to the unfolding of the unstable KH domain 1, creating a site for 14-3-3 YWHAZ binding, which promotes nuclear localization and impairs the RNA degradation function. As to expression, detected in neural and non-neural cell lines.

The protein resides in the nucleus. It is found in the cytoplasm. Functionally, binds to the dendritic targeting element and may play a role in mRNA trafficking. Part of a ternary complex that binds to the downstream control sequence (DCS) of the pre-mRNA. Mediates exon inclusion in transcripts that are subject to tissue-specific alternative splicing. May interact with single-stranded DNA from the far-upstream element (FUSE). May activate gene expression. Also involved in degradation of inherently unstable mRNAs that contain AU-rich elements (AREs) in their 3'-UTR, possibly by recruiting degradation machinery to ARE-containing mRNAs. This chain is Far upstream element-binding protein 2 (KHSRP), found in Homo sapiens (Human).